Reading from the N-terminus, the 320-residue chain is Bifunctional ligase/repressor BirA (320 aa).

A DNA-binding region (H-T-H motif) is located at residues 22–41 (GEQLGERLGMSRAAINKHIQ). Positions 66-254 (LLDADRIHSQ…KLRAALELFE (189 aa)) constitute a BPL/LPL catalytic domain. Residues 89 to 91 (STN), glutamine 112, 116 to 118 (RGR), and lysine 183 each bind biotin.

The protein belongs to the biotin--protein ligase family.

It carries out the reaction biotin + L-lysyl-[protein] + ATP = N(6)-biotinyl-L-lysyl-[protein] + AMP + diphosphate + H(+). Its function is as follows. Acts both as a biotin--[acetyl-CoA-carboxylase] ligase and a biotin-operon repressor. In the presence of ATP, BirA activates biotin to form the BirA-biotinyl-5'-adenylate (BirA-bio-5'-AMP or holoBirA) complex. HoloBirA can either transfer the biotinyl moiety to the biotin carboxyl carrier protein (BCCP) subunit of acetyl-CoA carboxylase, or bind to the biotin operator site and inhibit transcription of the operon. This chain is Bifunctional ligase/repressor BirA, found in Salmonella typhimurium (strain LT2 / SGSC1412 / ATCC 700720).